A 263-amino-acid polypeptide reads, in one-letter code: Lysine 5,6-aminomutase beta subunit (263 aa).

One can recognise a B12-binding domain in the interval 120-259 (EVVMVGASTG…TFILKEMVQR (140 aa)). Adenosylcob(III)alamin-binding positions include 130-136 (TDAHTVG) and H133. K144 carries the post-translational modification N6-(pyridoxal phosphate)lysine. Residues 185-192 (LVSQTVTQ), 219-223 (IAGGA), and 239-244 (FGPGKY) each bind adenosylcob(III)alamin.

The protein belongs to the KamE family. In terms of assembly, heterotetramer of 2 alpha and 2 beta subunits. Adenosylcob(III)alamin is required as a cofactor. Requires pyridoxal 5'-phosphate as cofactor.

The catalysed reaction is (3S)-3,6-diaminohexanoate = (3S,5S)-3,5-diaminohexanoate. The enzyme catalyses D-lysine = (2R,5S)-2,5-diaminohexanoate. Its pathway is amino-acid degradation; L-lysine degradation via acetate pathway. Functionally, catalyzes the migration of the L-beta-lysine and D-lysine epsilon amino group to the delta carbon to produce 3,5-diaminohexanoate and 2,5-diaminohexanoate, respectively. The protein is Lysine 5,6-aminomutase beta subunit of Fusobacterium nucleatum subsp. nucleatum (strain ATCC 25586 / DSM 15643 / BCRC 10681 / CIP 101130 / JCM 8532 / KCTC 2640 / LMG 13131 / VPI 4355).